The chain runs to 470 residues: Glutamate--tRNA ligase (470 aa).

Residues 15–25 (PSPTGFLHIGG) carry the 'HIGH' region motif. Residues 240 to 244 (KLSKR) carry the 'KMSKS' region motif. K243 contacts ATP.

This sequence belongs to the class-I aminoacyl-tRNA synthetase family. Glutamate--tRNA ligase type 1 subfamily. As to quaternary structure, monomer.

It localises to the cytoplasm. It catalyses the reaction tRNA(Glu) + L-glutamate + ATP = L-glutamyl-tRNA(Glu) + AMP + diphosphate. Functionally, catalyzes the attachment of glutamate to tRNA(Glu) in a two-step reaction: glutamate is first activated by ATP to form Glu-AMP and then transferred to the acceptor end of tRNA(Glu). This chain is Glutamate--tRNA ligase, found in Caulobacter vibrioides (strain ATCC 19089 / CIP 103742 / CB 15) (Caulobacter crescentus).